Consider the following 225-residue polypeptide: Cytidylate kinase (225 aa).

12–20 (GPSGAGKGT) lines the ATP pocket.

This sequence belongs to the cytidylate kinase family. Type 1 subfamily.

The protein localises to the cytoplasm. It carries out the reaction CMP + ATP = CDP + ADP. The catalysed reaction is dCMP + ATP = dCDP + ADP. This chain is Cytidylate kinase, found in Proteus mirabilis (strain HI4320).